We begin with the raw amino-acid sequence, 339 residues long: DNA-directed RNA polymerase subunit alpha (339 aa).

The segment at 1 to 233 (MVREEITGST…DLFLPFIHTE (233 aa)) is alpha N-terminal domain (alpha-NTD). The interval 266–339 (GIPLNCIFID…IDLPKNKFSL (74 aa)) is alpha C-terminal domain (alpha-CTD).

The protein belongs to the RNA polymerase alpha chain family. In terms of assembly, in plastids the minimal PEP RNA polymerase catalytic core is composed of four subunits: alpha, beta, beta', and beta''. When a (nuclear-encoded) sigma factor is associated with the core the holoenzyme is formed, which can initiate transcription.

The protein localises to the plastid. The protein resides in the chloroplast. The enzyme catalyses RNA(n) + a ribonucleoside 5'-triphosphate = RNA(n+1) + diphosphate. Functionally, DNA-dependent RNA polymerase catalyzes the transcription of DNA into RNA using the four ribonucleoside triphosphates as substrates. The chain is DNA-directed RNA polymerase subunit alpha from Saccharum hybrid (Sugarcane).